The chain runs to 493 residues: Cytochrome P450 2W1 (493 aa).

The first 23 residues, 1 to 23 (MALLLLGVWGILLLLGLWGLLQG), serve as a signal peptide directing secretion. An N-linked (GlcNAc...) asparagine glycan is attached at N180. C436 contacts heme.

It belongs to the cytochrome P450 family. Heme serves as cofactor. As to expression, detected in colon, ileum, and testes.

The protein localises to the endoplasmic reticulum lumen. The protein resides in the cell membrane. Its subcellular location is the microsome membrane. It catalyses the reaction all-trans-retinoate + reduced [NADPH--hemoprotein reductase] + O2 = all-trans-4-hydroxyretinoate + oxidized [NADPH--hemoprotein reductase] + H2O + H(+). The enzyme catalyses 1-(9Z-octadecenoyl)-sn-glycero-3-phosphocholine + reduced [NADPH--hemoprotein reductase] + O2 = 1-[8-hydroxy-(9Z)-octadecenoyl]-sn-glycero-3-phosphocholine + oxidized [NADPH--hemoprotein reductase] + H2O + H(+). The catalysed reaction is 1-(9Z-octadecenoyl)-sn-glycero-3-phosphocholine + reduced [NADPH--hemoprotein reductase] + O2 = 1-[11-hydroxy-(9Z)-octadecenoyl]-sn-glycero-3-phosphocholine + oxidized [NADPH--hemoprotein reductase] + H2O + H(+). It carries out the reaction 1-(9Z-octadecenoyl)-sn-glycero-3-phosphocholine + reduced [NADPH--hemoprotein reductase] + O2 = 1-[(9S,10R)-epoxy-octadecanoyl]-sn-glycero-3-phosphocholine + oxidized [NADPH--hemoprotein reductase] + H2O + H(+). It catalyses the reaction 1-(9Z-octadecenoyl)-sn-glycero-3-phosphocholine + reduced [NADPH--hemoprotein reductase] + O2 = 1-[(9R,10S)-epoxy-octadecanoyl]-sn-glycero-3-phosphocholine + oxidized [NADPH--hemoprotein reductase] + H2O + H(+). In terms of biological role, a cytochrome P450 monooxygenase that may play a role in retinoid and phospholipid metabolism. Catalyzes the hydroxylation of saturated carbon hydrogen bonds. Hydroxylates all trans-retinoic acid (atRA) to 4-hydroxyretinoate and may regulate atRA clearance. Other retinoids such as all-trans retinol and all-trans retinal are potential endogenous substrates. Catalyzes both epoxidation of double bonds and hydroxylation of carbon hydrogen bonds of the fatty acyl chain of 1-acylphospholipids/2-lysophospholipids. Can metabolize various lysophospholipids classes including lysophosphatidylcholines (LPCs), lysophosphatidylinositols (LPIs), lysophosphatidylserines (LPSs), lysophosphatidylglycerols (LPGs), lysophosphatidylethanolamines (LPEs) and lysophosphatidic acids (LPAs). Has low or no activity toward 2-acylphospholipids/1-lysophospholipids, diacylphospholipids and free fatty acids. May play a role in tumorigenesis by activating procarcinogens such as aflatoxin B1, polycyclic aromatic hydrocarbon dihydrodiols and aromatic amines. Mechanistically, uses molecular oxygen inserting one oxygen atom into a substrate, and reducing the second into a water molecule, with two electrons provided by NADPH via cytochrome P450 reductase (CPR; NADPH-ferrihemoprotein reductase). The polypeptide is Cytochrome P450 2W1 (Cyp2w1) (Mus musculus (Mouse)).